A 473-amino-acid chain; its full sequence is tRNA modification GTPase MnmE (473 aa).

3 residues coordinate (6S)-5-formyl-5,6,7,8-tetrahydrofolate: Arg-28, Glu-93, and Arg-132. A TrmE-type G domain is found at 228-394 (GVATVLVGSP…LKQQMSNMVA (167 aa)). GTP-binding positions include 238–243 (NAGKST), 257–263 (SHQPGTT), and 282–285 (DTAG). Mg(2+) contacts are provided by Ser-242 and Thr-263. Lys-473 contacts (6S)-5-formyl-5,6,7,8-tetrahydrofolate.

The protein belongs to the TRAFAC class TrmE-Era-EngA-EngB-Septin-like GTPase superfamily. TrmE GTPase family. In terms of assembly, homodimer. Heterotetramer of two MnmE and two MnmG subunits. K(+) is required as a cofactor.

It localises to the cytoplasm. Functionally, exhibits a very high intrinsic GTPase hydrolysis rate. Involved in the addition of a carboxymethylaminomethyl (cmnm) group at the wobble position (U34) of certain tRNAs, forming tRNA-cmnm(5)s(2)U34. The protein is tRNA modification GTPase MnmE of Chlorobium chlorochromatii (strain CaD3).